Here is a 1849-residue protein sequence, read N- to C-terminus: UPF0606 protein KIAA1549L (1849 aa).

Residues 1-10 (MDHTASQNAQ) are compositionally biased toward polar residues. 4 disordered regions span residues 1-70 (MDHT…LLQL), 142-166 (ATAN…PALS), 213-242 (PTEN…PATR), and 529-586 (RHSV…ERNA). 2 stretches are compositionally biased toward polar residues: residues 529-541 (RHSV…QLPN) and 552-586 (PGPT…ERNA). Residues 958–986 (KFAQTMEQRLQKAFQDAERKVLNTKSNLT) adopt a coiled-coil conformation. A helical membrane pass occupies residues 1180-1200 (LWIIAAVLAPIAVVTVIIIII). 4 disordered regions span residues 1258–1338 (LPIR…EEEG), 1460–1546 (SKNR…SQPS), 1656–1679 (RSTS…AQLH), and 1769–1819 (SRYP…APLT). Polar residues-rich tracts occupy residues 1290–1319 (PSEN…AQQK), 1463–1482 (RQQM…SPSP), and 1537–1546 (ETSTLSSQPS). Composition is skewed to low complexity over residues 1769–1786 (SRYP…YSQP) and 1795–1809 (QAPA…QSLA).

It belongs to the UPF0606 family.

It is found in the membrane. This chain is UPF0606 protein KIAA1549L (KIAA1549L), found in Homo sapiens (Human).